The following is a 56-amino-acid chain: Small ribosomal subunit protein uS14 (56 aa).

Zn(2+) contacts are provided by Cys21, Cys24, Cys39, and Cys42.

Belongs to the universal ribosomal protein uS14 family. In terms of assembly, component of the small ribosomal subunit (SSU). Mature N.crassa ribosomes consist of a small (40S) and a large (60S) subunit. The 40S small subunit contains 1 molecule of ribosomal RNA (18S rRNA) and at least 32 different proteins. The large 60S subunit contains 3 rRNA molecules (26S, 5.8S and 5S rRNA) and at least 42 different proteins. It depends on Zn(2+) as a cofactor.

The protein resides in the cytoplasm. Component of the ribosome, a large ribonucleoprotein complex responsible for the synthesis of proteins in the cell. The small ribosomal subunit (SSU) binds messenger RNAs (mRNAs) and translates the encoded message by selecting cognate aminoacyl-transfer RNA (tRNA) molecules. The large subunit (LSU) contains the ribosomal catalytic site termed the peptidyl transferase center (PTC), which catalyzes the formation of peptide bonds, thereby polymerizing the amino acids delivered by tRNAs into a polypeptide chain. The nascent polypeptides leave the ribosome through a tunnel in the LSU and interact with protein factors that function in enzymatic processing, targeting, and the membrane insertion of nascent chains at the exit of the ribosomal tunnel. This chain is Small ribosomal subunit protein uS14 (rps-29), found in Neurospora crassa (strain ATCC 24698 / 74-OR23-1A / CBS 708.71 / DSM 1257 / FGSC 987).